We begin with the raw amino-acid sequence, 189 residues long: Peptidyl-tRNA hydrolase (189 aa).

Tyr15 is a tRNA binding site. His20 functions as the Proton acceptor in the catalytic mechanism. TRNA-binding residues include Phe66, Asn68, and Asn114.

This sequence belongs to the PTH family. In terms of assembly, monomer.

The protein localises to the cytoplasm. The catalysed reaction is an N-acyl-L-alpha-aminoacyl-tRNA + H2O = an N-acyl-L-amino acid + a tRNA + H(+). Its function is as follows. Hydrolyzes ribosome-free peptidyl-tRNAs (with 1 or more amino acids incorporated), which drop off the ribosome during protein synthesis, or as a result of ribosome stalling. Functionally, catalyzes the release of premature peptidyl moieties from peptidyl-tRNA molecules trapped in stalled 50S ribosomal subunits, and thus maintains levels of free tRNAs and 50S ribosomes. The polypeptide is Peptidyl-tRNA hydrolase (Acidithiobacillus ferrooxidans (strain ATCC 23270 / DSM 14882 / CIP 104768 / NCIMB 8455) (Ferrobacillus ferrooxidans (strain ATCC 23270))).